The following is a 720-amino-acid chain: ABC transporter G family member STR2 (720 aa).

Topologically, residues 1-467 (MRHANGRRGD…NFINIRRTPE (467 aa)) are cytoplasmic. The 250-residue stretch at 25-274 (LEFSNLTYTV…LGRMGRKVPK (250 aa)) folds into the ABC transporter domain. 70–77 (GPSGAGKS) lines the ATP pocket. The tract at residues 313–346 (GAHEMSIVPPSPAPSHREGRGHDRSNKRLHLKDQ) is disordered. Over residues 327–346 (SHREGRGHDRSNKRLHLKDQ) the composition is skewed to basic and acidic residues. A helical membrane pass occupies residues 468–488 (LFLSRLVVLTVMGIMMATMFM). Over 489–502 (HPKKNLQGITNRLS) the chain is Extracellular. Residues 503 to 523 (FFIFTVCLFFFSSNDAVPAFI) form a helical membrane-spanning segment. Residues 524–547 (QERFIFVRETSHNKYRASSYTIAG) are Cytoplasmic-facing. A helical transmembrane segment spans residues 548-568 (LITYLPFLAVQAAVYAVIVWF). The Extracellular portion of the chain corresponds to 569 to 575 (ALSLRGP). A helical membrane pass occupies residues 576 to 596 (FIYFLIVLYMSLLSTNSFVVF). The Cytoplasmic segment spans residues 597-604 (VSSVVPNY). Residues 605–625 (ILGYAAVIAFTALFFLFCGYF) form a helical membrane-spanning segment. Residues 626–693 (LNSHDMPQYW…QVESKKWEKV (68 aa)) are Extracellular-facing. Residue Asn681 is glycosylated (N-linked (GlcNAc...) asparagine). The helical transmembrane segment at 694–714 (YIMLAWAIVYRILFYIVLRFF) threads the bilayer. The Cytoplasmic segment spans residues 715 to 720 (SKNQRT).

This sequence belongs to the ABC transporter superfamily. ABCG family. Stunted arbuscule (STR) subfamily. Heterodimerizes with STR; the resulting transporter is located in the peri-arbuscular membrane.

It is found in the cell membrane. In terms of biological role, together with STR, required for arbuscule development in arbuscular mycorrhizal (AM) symbiosis. This Petunia hybrida (Petunia) protein is ABC transporter G family member STR2.